The chain runs to 7094 residues: Replicase polyprotein 1ab (7094 aa).

The region spanning 54-196 is the CoV Nsp1 globular domain; it reads PENHVMVDCR…PWVMYLRKCG (143 aa). The BetaCoV Nsp1 C-terminal domain maps to 216-246; that stretch reads FKVEDAYDLVHDEPKGKFSKKAYALIRGYRG. The 270-residue stretch at 250-519 folds into the CoV Nsp2 N-terminal domain; sequence LLYVDQYGCD…LICKALYLDY (270 aa). Zn(2+)-binding residues include Cys392, Cys397, Cys413, and Cys416. A C4 region spans residues 392 to 416; it reads CEQDLCDFKGWVPGNMIDGFACTTC. The CoV Nsp2 middle domain maps to 524–713; that stretch reads CGNLHQRELL…AQAFRSVAKV (190 aa). Residues 733–851 enclose the CoV Nsp2 C-terminal domain; sequence RRRICLSGSK…LDQAWRVPCA (119 aa). Positions 853–966 constitute a Ubiquitin-like 1 domain; that stretch reads RRVTFKEQPT…LYCAFTAPED (114 aa). The Peptidase C16 1 domain occupies 1036 to 1274; that stretch reads DLESVIQDYE…IAQLYGSCIT (239 aa). Cys1074 acts as the For PL1-PRO activity in catalysis. Residues Cys1151, Cys1154, Cys1177, and Cys1179 each contribute to the Zn(2+) site. The C4-type 1 zinc-finger motif lies at 1151–1179; that stretch reads CIKCDLALKLKGLDAMFFYGDVVSHVCKC. Catalysis depends on for PL1-PRO activity residues His1225 and Asp1236. The 161-residue stretch at 1275 to 1435 folds into the Macro domain; that stretch reads PNVCFVKGDI…LISKCQITAV (161 aa). One can recognise a DPUP domain in the interval 1491–1563; it reads DDARTFVQSN…VAQIKALFLD (73 aa). Residues 1562–1617 enclose the Ubiquitin-like 2 domain; that stretch reads LDKVDILLTVDGVNFTNRFVPVGENFGKSLGNVFCDGVNVTKHKCDINYKGKVFFQ. A Peptidase C16 2 domain is found at 1631–1892; sequence SSFNFDQKEL…KIEYKPDLSQ (262 aa). Catalysis depends on Cys1671, which acts as the For PL2-PRO activity. Positions 1749, 1751, 1783, and 1785 each coordinate Zn(2+). The C4-type 2 zinc finger occupies 1749–1785; the sequence is CKCGVKQEQRTGVDAVMHFGTLSREDLEIGYTVDCSC. Catalysis depends on for PL2-PRO activity residues His1828 and Asp1842. In terms of domain architecture, Nucleic acid-binding spans 1906 to 2007; it reads IKAQFKTFEK…TYFNRPLLVD (102 aa). A G2M domain is found at 2020-2169; that stretch reads DDGGDISESD…ADNKVIYTTE (150 aa). The next 3 helical transmembrane spans lie at 2138 to 2158, 2199 to 2219, and 2227 to 2247; these read ISAC…WIKI, ACII…NVIF, and IGFL…TFSL. Residues 2138–2385 are HD1; it reads ISACFNFIKW…ASFIKLFSLF (248 aa). The 3Ecto domain maps to 2235 to 2296; that stretch reads GKIAQWIKST…AIDVVQYEAD (62 aa). 2 disulfide bridges follow: Cys2251-Cys2275 and Cys2266-Cys2272. 3 helical membrane-spanning segments follow: residues 2313–2333, 2343–2363, and 2365–2385; these read LIVS…LISI, LFML…ANML, and AHVF…FSLF. The segment at 2383 to 2473 is Y1; it reads SLFRHVAYGC…ELKRPIQPTD (91 aa). The 368-residue stretch at 2383 to 2750 folds into the CoV Nsp3 Y domain; sequence SLFRHVAYGC…LTTPFSLKGG (368 aa). Positions 2387, 2392, 2397, 2400, 2433, 2436, 2440, and 2443 each coordinate Zn(2+). Positions 2387–2400 are ZF1; that stretch reads HVAYGCSKPGCLFC. Residues 2433–2443 are ZF2; it reads CSKHQWNCIDC. Residues 2474–2566 form a Y2 region; the sequence is VAYHTVTDVK…MVDKNLITTA (93 aa). The tract at residues 2474–2750 is coV-Y; that stretch reads VAYHTVTDVK…LTTPFSLKGG (277 aa). The tract at residues 2567-2649 is Y3; it reads NTGTSVTETM…DSVMSAVSAG (83 aa). The interval 2650–2750 is Y4; sequence LELTDESCNN…LTTPFSLKGG (101 aa). The next 7 membrane-spanning stretches (helical) occupy residues 2752–2772, 2824–2844, 3009–3029, 3031–3051, 3063–3083, 3090–3110, and 3115–3135; these read VFSY…IGLW, STFG…VAVV, VFDL…FLAL, ASSI…YYLI, IVFV…VFQV, VYAI…SVIM, and LVMY…SVVV. The HD2 stretch occupies residues 2752–3135; the sequence is VFSYFVYVCF…FCLLYISVVV (384 aa). The Nsp4C domain occupies 3149–3246; the sequence is LGTSVRSDGT…TASVSTSFLQ (98 aa). A Peptidase C30 domain is found at 3247-3549; it reads SGIVKMVNPT…YQQLAGIKLQ (303 aa). Catalysis depends on for 3CL-PRO activity residues His3287 and Cys3391. Transmembrane regions (helical) follow at residues 3558 to 3578, 3588 to 3608, 3614 to 3634, 3657 to 3677, 3684 to 3704, 3711 to 3731, and 3755 to 3775; these read GIVC…TAFV, TNML…MLLV, YLTM…YLVV, TYTD…FVTL, LFSF…WYMG, ILLM…LSMA, and IVLV…GLFS. The HD3 stretch occupies residues 3558-3775; that stretch reads GIVCWIMAST…IISCYWGLFS (218 aa). The 89-residue stretch at 3837–3925 folds into the RdRp Nsp7 cofactor domain; that stretch reads SKLTDVKCAN…DYAKDNTVLQ (89 aa). In terms of domain architecture, RdRp Nsp8 cofactor spans 3926 to 4122; sequence ALQSEFVNMA…HNEVSATVLQ (197 aa). The 110-residue stretch at 4123-4232 folds into the Nsp9 ssRNA-binding domain; that stretch reads NNELMPAKLK…GTISSTVRLQ (110 aa). Positions 4233-4370 constitute an ExoN/MTase coactivator domain; it reads AGTATEYASN…CVSTDTTVQS (138 aa). 8 residues coordinate Zn(2+): Cys4306, Cys4309, His4315, Cys4322, Cys4348, Cys4351, Cys4359, and Cys4361. 2 zinc fingers span residues 4306 to 4322 and 4348 to 4361; these read CIYC…DGLC and CQVC…SCSC. Residues 4375 to 4630 enclose the NiRAN domain; it reads FLNRVRGTSV…DCELYVNNAY (256 aa). Positions 4578 and 4587 each coordinate Mn(2+). The Nsp12 Interface domain occupies 4631–4729; sequence RLFDLVQYDF…MNMDVDTHRY (99 aa). 5 residues coordinate Zn(2+): His4660, Cys4666, Cys4671, Cys4675, and Cys4852. The Nsp12 RNA-dependent RNA polymerase domain occupies 4730–5297; sequence RLSLKDLLLY…NMYLRSAVMQ (568 aa). Positions 4732 to 4946 are rdRp Fingers N-ter; it reads SLKDLLLYAA…HQKCLKSIAA (215 aa). The tract at residues 4947–4985 is rdRp Palm N-ter; it reads TRGVPVVIGTTKFYGGWDDMLRRLIKDVDNPVLMGWDYP. Positions 4977–5139 constitute a RdRp catalytic domain; that stretch reads PVLMGWDYPK…CYNSDYASKG (163 aa). The segment at 4986-5044 is rdRp Fingers C-ter; that stretch reads KCDRAMPNILRIVSSLVLARKHEACCSQSDRFYRLANECAQVLSEIVMCGGCYYVKPGG. Residues His5007, Cys5010, and Cys5011 each contribute to the Zn(2+) site. Residues 5045–5180 form a rdRp Palm C-ter region; the sequence is TSSGDATTAF…NNGPHEFCSQ (136 aa). Active-site residues include Ser5124, Asp5125, and Asp5126. A rdRp Thumb region spans residues 5181-5297; sequence HTMLVKMDGD…NMYLRSAVMQ (117 aa). The region spanning 5298–5410 is the CV ZBD domain; that stretch reads SVGACVVCSS…DDFNRIASCK (113 aa). Positions 5302, 5305, 5313, 5316, 5323, 5326, 5330, 5336, 5347, 5352, 5369, and 5372 each coordinate Zn(2+). Residues 5553–5734 form the (+)RNA virus helicase ATP-binding domain; that stretch reads SVLETFQNNV…MCCLGPDIFL (182 aa). Residue 5578–5585 coordinates ATP; that stretch reads GPPGTGKS. The region spanning 5735–5904 is the (+)RNA virus helicase C-terminal domain; that stretch reads GTCYRCPKEI…VETRVQCSTN (170 aa). In terms of domain architecture, ExoN spans 5971–6186; sequence LFITKEEAVK…RCLAVYDCFC (216 aa). Catalysis depends on residues Asp5989, Glu5991, and Glu6090. Residues Cys6106, Cys6109, Cys6125, His6128, His6156, Cys6160, and His6163 each contribute to the Zn(2+) site. Residues His6167 and Asp6172 contribute to the active site. Cys6178 is a binding site for Zn(2+). One can recognise an N7-MTase domain in the interval 6195 to 6421; the sequence is YPIISNELSI…NLWNTFTKLQ (227 aa). 6230 to 6236 is an S-adenosyl-L-methionine binding site; it reads DIGNPKA. The tract at residues 6308-6322 is gpppA-binding; that stretch reads CNGGSLYVNKHAFHT. Positions 6346, 6367, 6378, and 6381 each coordinate Zn(2+). Residues 6422-6482 enclose the Nsp15 N-terminal oligomerization domain; it reads SLENVVYNLV…NVAVELFAKR (61 aa). The region spanning 6483 to 6603 is the AV-Nsp11N/CoV-Nsp15M domain; that stretch reads SIRHHPELKL…FAVRKEGQDV (121 aa). The NendoU domain maps to 6653–6792; it reads TCRTDMEKDF…NDEKVMTFYP (140 aa). Catalysis depends on residues His6683, His6698, Lys6738, Lys6841, Asp6925, Lys6965, and Glu6998. The Nidovirus-type SAM-dependent 2'-O-MTase domain occupies 6797–7091; sequence ASDWKPGYSM…KEVFVGDSLV (295 aa).

This sequence belongs to the coronaviruses polyprotein 1ab family. As to quaternary structure, interacts with host PHB and PHB2. In terms of assembly, interacts with papain-like protease nsp3 and non-structural protein 6. Monomer. Homodimer. Only the homodimer shows catalytic activity. As to quaternary structure, interacts with nsp8 and nsp12 to form the replication-transcription complex (RTC): nsp12, nsp7, two subunits of nsp8, and up to two subunits of nsp13. In terms of assembly, interacts with nsp7, nsp13 and nsp12 to form the replication-transcription complex (RTC): nsp12, nsp7, two subunits of nsp8, and up to two subunits of nsp13. Interacts with nsp12. As to quaternary structure, interacts with proofreading exoribonuclease nsp14 and 2'-O-methyltransferase nsp16; these interactions enhance nsp14 and nsp16 enzymatic activities. In terms of assembly, interacts with nsp7 and nsp8 to form the replication-transcription complex (RTC): nsp12, nsp7, two subunits of nsp8, and up to two subunits of nsp13. Interacts with nsp9. Interacts with nsp8 to form the replication-transcription complex (RTC): nsp12, nsp7, two subunits of nsp8, and up to two subunits of nsp13. Requires Mn(2+) as cofactor. Mg(2+) is required as a cofactor. In terms of processing, specific enzymatic cleavages in vivo by its own proteases yield mature proteins. 3CL-PRO and PL-PRO proteinases are autocatalytically processed.

Its subcellular location is the host membrane. The protein resides in the host cytoplasm. It localises to the host perinuclear region. The protein localises to the host endoplasmic reticulum-Golgi intermediate compartment. The catalysed reaction is RNA(n) + a ribonucleoside 5'-triphosphate = RNA(n+1) + diphosphate. It carries out the reaction ATP + H2O = ADP + phosphate + H(+). The enzyme catalyses Thiol-dependent hydrolysis of ester, thioester, amide, peptide and isopeptide bonds formed by the C-terminal Gly of ubiquitin (a 76-residue protein attached to proteins as an intracellular targeting signal).. It catalyses the reaction a 5'-end (N(7)-methyl 5'-triphosphoguanosine)-ribonucleoside in mRNA + S-adenosyl-L-methionine = a 5'-end (N(7)-methyl 5'-triphosphoguanosine)-(2'-O-methyl-ribonucleoside) in mRNA + S-adenosyl-L-homocysteine + H(+). The catalysed reaction is uridylyl-uridylyl-ribonucleotide-RNA = a 3'-end uridylyl-2',3'-cyclophospho-uridine-RNA + a 5'-end dephospho-ribonucleoside-RNA. It carries out the reaction a 5'-end diphospho-ribonucleoside in mRNA + GTP + H(+) = a 5'-end (5'-triphosphoguanosine)-ribonucleoside in mRNA + diphosphate. The enzyme catalyses a 5'-end (5'-triphosphoguanosine)-ribonucleoside in mRNA + S-adenosyl-L-methionine = a 5'-end (N(7)-methyl 5'-triphosphoguanosine)-ribonucleoside in mRNA + S-adenosyl-L-homocysteine. The replicase polyprotein of coronaviruses is a multifunctional protein: it contains the activities necessary for the transcription of negative stranded RNA, leader RNA, subgenomic mRNAs and progeny virion RNA as well as proteinases responsible for the cleavage of the polyprotein into functional products. Its function is as follows. Inhibits host translation by interacting with the 40S ribosomal subunit. The nsp1-40S ribosome complex further induces an endonucleolytic cleavage near the 5'UTR of host mRNAs, targeting them for degradation. Viral mRNAs are not susceptible to nsp1-mediated endonucleolytic RNA cleavage thanks to the presence of a 5'-end leader sequence and are therefore protected from degradation. By suppressing host gene expression, nsp1 facilitates efficient viral gene expression in infected cells and evasion from host immune response. Functionally, may play a role in the modulation of host cell survival signaling pathway by interacting with host PHB and PHB2. Indeed, these two proteins play a role in maintaining the functional integrity of the mitochondria and protecting cells from various stresses. In terms of biological role, responsible for the cleavages located at the N-terminus of the replicase polyprotein. In addition, PL-PRO possesses a deubiquitinating/deISGylating activity and processes both 'Lys-48'- and 'Lys-63'-linked polyubiquitin chains from cellular substrates. Participates together with nsp4 in the assembly of virally-induced cytoplasmic double-membrane vesicles necessary for viral replication. Antagonizes innate immune induction of type I interferon by blocking the phosphorylation, dimerization and subsequent nuclear translocation of host IRF3. Also prevents host NF-kappa-B signaling. Participates in the assembly of virally-induced cytoplasmic double-membrane vesicles necessary for viral replication. Its function is as follows. Cleaves the C-terminus of replicase polyprotein at 11 sites. Recognizes substrates containing the core sequence [ILMVF]-Q-|-[SGACN]. Also able to bind an ADP-ribose-1''-phosphate (ADRP). Functionally, plays a role in the initial induction of autophagosomes from host endoplasmic reticulum. Later, limits the expansion of these phagosomes that are no longer able to deliver viral components to lysosomes. In terms of biological role, forms a hexadecamer with nsp8 (8 subunits of each) that may participate in viral replication by acting as a primase. Alternatively, may synthesize substantially longer products than oligonucleotide primers. Forms a hexadecamer with nsp7 (8 subunits of each) that may participate in viral replication by acting as a primase. Alternatively, may synthesize substantially longer products than oligonucleotide primers. Its function is as follows. Forms a primer, NSP9-pU, which is utilized by the polymerase for the initiation of RNA chains. Interacts with ribosome signal recognition particle RNA (SRP). Together with NSP8, suppress protein integration into the cell membrane, thereby disrupting host immune defenses. Functionally, plays a pivotal role in viral transcription by stimulating both nsp14 3'-5' exoribonuclease and nsp16 2'-O-methyltransferase activities. Therefore plays an essential role in viral mRNAs cap methylation. In terms of biological role, RNA-directed RNA polymerase that catalyzes the transcription of viral genomic and subgenomic RNAs. Acts in complex with nsp7 and nsp8 to transcribe both the minus and positive strands of genomic RNA. The kinase-like NiRAN domain of NSP12 attaches one or more nucleotides to the amino terminus of NSP9, forming a covalent RNA-protein intermediate that serves as transcription/replication primer. Subgenomic RNAs (sgRNAs) are formed by discontinuous transcription: The polymerase has the ability to pause at transcription-regulating sequences (TRS) and jump to the leader TRS, resulting in a major deletion. This creates a series of subgenomic RNAs that are replicated, transcribed and translated. In addition, Nsp12 is a subunit of the viral RNA capping enzyme that catalyzes the RNA guanylyltransferase reaction for genomic and sub-genomic RNAs. Subsequently, the NiRAN domain transfers RNA to GDP, and forms the core cap structure GpppA-RNA. Multi-functional protein with a zinc-binding domain in N-terminus displaying RNA and DNA duplex-unwinding activities with 5' to 3' polarity. Activity of helicase is dependent on magnesium. Its function is as follows. Plays a role in viral RNA synthesis through two distinct activities. The N7-guanine methyltransferase activity plays a role in the formation of the cap structure GpppA-RNA. The proofreading exoribonuclease reduces the sensitivity of the virus to RNA mutagens during replication. This activity acts on both ssRNA and dsRNA in a 3'-5' direction. Functionally, plays a role in viral transcription/replication and prevents the simultaneous activation of host cell dsRNA sensors, such as MDA5/IFIH1, OAS, and PKR. Acts by degrading the 5'-polyuridines generated during replication of the poly(A) region of viral genomic and subgenomic RNAs. Catalyzes a two-step reaction in which a 2'3'-cyclic phosphate (2'3'-cP) is first generated by 2'-O transesterification, which is then hydrolyzed to a 3'-phosphate (3'-P). If not degraded, poly(U) RNA would hybridize with poly(A) RNA tails and activate host dsRNA sensors. In terms of biological role, methyltransferase that mediates mRNA cap 2'-O-ribose methylation to the 5'-cap structure of viral mRNAs. N7-methyl guanosine cap is a prerequisite for binding of nsp16. Therefore plays an essential role in viral mRNAs cap methylation which is essential to evade immune system. The polypeptide is Replicase polyprotein 1ab (rep) (Bos taurus (Bovine)).